The primary structure comprises 456 residues: Myricetin 3-O-rhamnosyltransferase UGT77B2 (456 aa).

Histidine 19 acts as the Proton acceptor in catalysis. Histidine 19 lines the an anthocyanidin pocket. Aspartate 116 functions as the Charge relay in the catalytic mechanism. Residue histidine 147 coordinates an anthocyanidin. UDP-beta-L-rhamnose contacts are provided by threonine 279, alanine 334, histidine 351, asparagine 355, and glutamate 359. An an anthocyanidin-binding site is contributed by alanine 374.

It belongs to the UDP-glycosyltransferase family. As to expression, expressed in young cromes.

The enzyme catalyses myricetin + UDP-beta-L-rhamnose = myricetin 3-O-alpha-L-rhamnoside + UDP + H(+). The protein operates within flavonoid metabolism. Rhamnosyltransferase involved in montbretin A (MbA) biosynthesis. Catalyzes the 3-O rhamnosylation of myricetin to produce myricetin 3-O-alpha-L-rhamnoside (MR), a precursor of MbA. MbA is a potent inhibitor of human pancreatic alpha-amylase and is being developed as drug candidate to treat type-2 diabetes. In vitro, is able to transfer UDP-glucose and UDP-xylose with 50-fold less efficiency compared with UDP-rhamnose. In vitro, can use kaempferol or quercetin as substrates, although these two flavonols may not be physiological substrates in vivo. In Crocosmia x crocosmiiflora (Montbretia), this protein is Myricetin 3-O-rhamnosyltransferase UGT77B2.